The primary structure comprises 181 residues: RNA-binding protein (181 aa).

The interval 106–181 (FLTSVNPGES…DANTRKSKRK (76 aa)) is disordered. Over residues 141-157 (RNSKKGAKKSSSARKKK) the composition is skewed to basic residues. Residues 160 to 172 (SSNSETDLSSDSD) are compositionally biased toward low complexity.

The protein belongs to the phytoreovirus RNA-binding protein family.

The protein resides in the host cytoplasm. Functionally, constituent of viral factories. Binds to ssRNA and dsRNA. In Rice dwarf virus (isolate Akita) (RDV), this protein is RNA-binding protein.